Reading from the N-terminus, the 128-residue chain is Large ribosomal subunit protein bL20c (128 aa).

It belongs to the bacterial ribosomal protein bL20 family.

It localises to the plastid. The protein resides in the chloroplast. Its function is as follows. Binds directly to 23S ribosomal RNA and is necessary for the in vitro assembly process of the 50S ribosomal subunit. It is not involved in the protein synthesizing functions of that subunit. The protein is Large ribosomal subunit protein bL20c of Trachelium caeruleum (Blue throatwort).